We begin with the raw amino-acid sequence, 207 residues long: CASP-like protein F16 (207 aa).

Residues 1-30 form a disordered region; it reads MEKSEKGNGVAPATRSPMALMGSSRNENQE. At 1-37 the chain is on the cytoplasmic side; it reads MEKSEKGNGVAPATRSPMALMGSSRNENQEVNTSMRT. Residues 38-58 form a helical membrane-spanning segment; sequence AETMLRLVPMALGVAALVVML. Over 59–79 the chain is Extracellular; sequence KNSQSNDFGSVSYSDLGAFRY. Residues 80–100 form a helical membrane-spanning segment; it reads LVHANGICAGYSLLSAIIAAV. The Cytoplasmic portion of the chain corresponds to 101–108; that stretch reads PSPSTMPR. A helical membrane pass occupies residues 109 to 129; sequence AWTFFLLDQILTYVILGAAAV. The Extracellular portion of the chain corresponds to 130 to 159; the sequence is STEVLYLANKGDSAITWSAACGTFAGFCHK. Residues 160 to 180 form a helical membrane-spanning segment; it reads ATIAVVITFVAVICYAVLSLV. The Cytoplasmic segment spans residues 181 to 207; the sequence is SSYRLFTKFDAPVNYPSKTIEATVFHG.

The protein belongs to the Casparian strip membrane proteins (CASP) family. Homodimer and heterodimers.

The protein resides in the cell membrane. The chain is CASP-like protein F16 (F16) from Gossypium hirsutum (Upland cotton).